A 655-amino-acid polypeptide reads, in one-letter code: Squalene-tetrahymanol cyclase THC1 (655 aa).

Residues 1–20 (MKKILIGLIIGLFLFSSVNA) form the signal peptide. Asparagine 23, asparagine 44, asparagine 69, and asparagine 77 each carry an N-linked (GlcNAc...) asparagine glycan. The active-site Proton donor is the aspartate 373. PFTB repeat units follow at residues 393–435 (IPET…GIAN) and 515–562 (VQNS…GLLA).

It belongs to the terpene cyclase/mutase family.

The protein localises to the membrane. The enzyme catalyses tetrahymanol = squalene + H2O. With respect to regulation, 2,3-iminosqualene and N,N-dimethyldodecylamine~N-oxlde are effective inhibitors with IC(50) values of 50 and 30 nM, respectively. Its function is as follows. Squalene cyclase that catalyzes the oxygen-independent cyclization of squalene into tetrahymanol, a triterpenoid sterol with five cyclohexyl rings that is involved in membrane integrity, permeability and fluidity. In Tetrahymena thermophila (strain SB210), this protein is Squalene-tetrahymanol cyclase THC1.